A 342-amino-acid chain; its full sequence is A-type ATP synthase subunit C (342 aa).

This sequence belongs to the V-ATPase V0D/AC39 subunit family. Has multiple subunits with at least A(3), B(3), C, D, E, F, H, I and proteolipid K(x).

Its subcellular location is the cell membrane. Its function is as follows. Component of the A-type ATP synthase that produces ATP from ADP in the presence of a proton gradient across the membrane. In Archaeoglobus fulgidus (strain ATCC 49558 / DSM 4304 / JCM 9628 / NBRC 100126 / VC-16), this protein is A-type ATP synthase subunit C.